The following is a 498-amino-acid chain: ATP synthase subunit beta, chloroplastic (498 aa).

172–179 (GGAGVGKT) lines the ATP pocket.

The protein belongs to the ATPase alpha/beta chains family. In terms of assembly, F-type ATPases have 2 components, CF(1) - the catalytic core - and CF(0) - the membrane proton channel. CF(1) has five subunits: alpha(3), beta(3), gamma(1), delta(1), epsilon(1). CF(0) has four main subunits: a(1), b(1), b'(1) and c(9-12).

Its subcellular location is the plastid. It localises to the chloroplast thylakoid membrane. The enzyme catalyses ATP + H2O + 4 H(+)(in) = ADP + phosphate + 5 H(+)(out). Its function is as follows. Produces ATP from ADP in the presence of a proton gradient across the membrane. The catalytic sites are hosted primarily by the beta subunits. This is ATP synthase subunit beta, chloroplastic from Daucus carota (Wild carrot).